The primary structure comprises 228 residues: tRNA (guanine-N(1)-)-methyltransferase (228 aa).

S-adenosyl-L-methionine is bound by residues glycine 111 and 135-140; that span reads LGDYVL.

It belongs to the RNA methyltransferase TrmD family. Homodimer.

The protein localises to the cytoplasm. It catalyses the reaction guanosine(37) in tRNA + S-adenosyl-L-methionine = N(1)-methylguanosine(37) in tRNA + S-adenosyl-L-homocysteine + H(+). In terms of biological role, specifically methylates guanosine-37 in various tRNAs. This Clavibacter sepedonicus (Clavibacter michiganensis subsp. sepedonicus) protein is tRNA (guanine-N(1)-)-methyltransferase.